A 701-amino-acid polypeptide reads, in one-letter code: Coiled-coil domain-containing protein 62 (701 aa).

2 coiled-coil regions span residues Glu61–Arg197 and Thr241–Asn342. The tract at residues Lys624–Ser652 is disordered. Residues Pro636–Phe648 show a composition bias toward basic and acidic residues. 2 short sequence motifs (LXXLL motif) span residues Leu654 to Leu658 and Leu670 to Leu674.

As to quaternary structure, interacts with ESR1 and ESR2 in the presence of estradiol/E2. The interaction with ESR2 recruits CCDC62 to ER target genes, including cyclin-D1/CCND1 AP-1 promoter. Interacts with GOPC. Highly expressed in testis, not detected in other tissues (at protein level). Expressed at low levels in the epididymis, lung, spleen, bladder, kidney, liver, muscle.

Its subcellular location is the cytoplasm. The protein resides in the nucleus. It is found in the cytoplasmic vesicle. The protein localises to the secretory vesicle. It localises to the acrosome. In terms of biological role, nuclear receptor coactivator that can enhance preferentially estrogen receptors ESR1 and ESR2 transactivation. Also modulates progesterone/PGR, glucocorticoid/NR3C1 and androgen/AR receptors transactivation, although at lower level; little effect on vitamin D receptor/VDR. Required for normal spermiogenesis. It probably plays a role in acrosome formation. This Mus musculus (Mouse) protein is Coiled-coil domain-containing protein 62 (Ccdc62).